Consider the following 616-residue polypeptide: Homeodomain-interacting protein kinase 4 (616 aa).

In terms of domain architecture, Protein kinase spans 11-347; it reads YDIIEVLGKG…PSAALRHPFV (337 aa). ATP is bound by residues 17–25 and Lys-40; that span reads LGKGTFGEV. The Proton acceptor role is filled by Asp-136. The interval 487–616 is disordered; the sequence is HKARKAPAGS…SFLQHVGGHH (130 aa). A compositionally biased stretch (polar residues) spans 497 to 512; it reads KSDSNFSNLIRLSQAS. Ser-512 bears the Phosphoserine mark. The span at 542–560 shows a compositional bias: basic and acidic residues; the sequence is REGDGPGIKDRPMDAERPG.

Belongs to the protein kinase superfamily. CMGC Ser/Thr protein kinase family. HIPK subfamily. In terms of processing, autophosphorylated. In terms of tissue distribution, expressed at moderate levels in lung and white adipose tissues and weakly in brain and liver.

It is found in the cytoplasm. The catalysed reaction is L-seryl-[protein] + ATP = O-phospho-L-seryl-[protein] + ADP + H(+). It catalyses the reaction L-threonyl-[protein] + ATP = O-phospho-L-threonyl-[protein] + ADP + H(+). Its function is as follows. Protein kinase that phosphorylates murine TP53 at Ser-9, and thus induces TP53 repression of BIRC5 promoter. May act as a corepressor of transcription factors (Potential). In Mus musculus (Mouse), this protein is Homeodomain-interacting protein kinase 4 (Hipk4).